Consider the following 202-residue polypeptide: P25 protein (202 aa).

Residues 7 to 195 enclose the Flavodoxin-like domain; the sequence is VAIVIYSTYG…EIARIQGETF (189 aa). Position 181 is a phosphoserine (serine 181).

Belongs to the WrbA family. As to quaternary structure, homodimer.

Unknown. Target of pap1 transcription factor. Confers brefeldin A resistance in S.pombe. The protein is P25 protein (obr1) of Schizosaccharomyces pombe (strain 972 / ATCC 24843) (Fission yeast).